The following is a 221-amino-acid chain: F-box protein At1g55000 (221 aa).

The 40-residue stretch at Asp7–Thr46 folds into the F-box domain. Positions Ile74–Ile118 constitute a LysM domain.

As to quaternary structure, part of a SCF (ASK-cullin-F-box) protein ligase complex. Interacts with SKP1A/ASK1, SKP1B/ASK2, ASK4, ASK11 and ASK13.

Its pathway is protein modification; protein ubiquitination. In terms of biological role, component of SCF(ASK-cullin-F-box) E3 ubiquitin ligase complexes, which may mediate the ubiquitination and subsequent proteasomal degradation of target proteins. The chain is F-box protein At1g55000 from Arabidopsis thaliana (Mouse-ear cress).